Consider the following 470-residue polypeptide: Glutamate--tRNA ligase (470 aa).

The 'HIGH' region signature appears at 9-19 (PSPTGFLHVGG). The 'KMSKS' region motif lies at 236 to 240 (RLSKR). Position 239 (lysine 239) interacts with ATP.

This sequence belongs to the class-I aminoacyl-tRNA synthetase family. Glutamate--tRNA ligase type 1 subfamily. In terms of assembly, monomer.

Its subcellular location is the cytoplasm. The enzyme catalyses tRNA(Glu) + L-glutamate + ATP = L-glutamyl-tRNA(Glu) + AMP + diphosphate. In terms of biological role, catalyzes the attachment of glutamate to tRNA(Glu) in a two-step reaction: glutamate is first activated by ATP to form Glu-AMP and then transferred to the acceptor end of tRNA(Glu). The polypeptide is Glutamate--tRNA ligase (Legionella pneumophila (strain Corby)).